The sequence spans 202 residues: N-acetyltransferase 9-like protein (202 aa).

The 151-residue stretch at 34-184 (EEIRRLTGSE…FTFELPKNRL (151 aa)) folds into the N-acetyltransferase domain.

The protein belongs to the acetyltransferase family. GNAT subfamily.

The sequence is that of N-acetyltransferase 9-like protein from Caenorhabditis elegans.